The primary structure comprises 393 residues: HORMA domain-containing protein 1 (393 aa).

The 203-residue stretch at 24 to 226 (QQSLVLVKRL…TPFHTFKVKV (203 aa)) folds into the HORMA domain. The disordered stretch occupies residues 322–393 (SKTSELDVSE…RKFSEPKERI (72 aa)). Residues 352 to 361 (KSKENRKRTQ) show a composition bias toward basic and acidic residues. A Phosphoserine modification is found at S375. The Nuclear localization signal signature appears at 382-385 (KRRK).

In terms of assembly, interacts with HORMAD2. Interacts with IHO1. In terms of processing, phosphorylated at Ser-376 in a SPO11-dependent manner.

The protein localises to the nucleus. The protein resides in the chromosome. Functionally, plays a key role in meiotic progression. Regulates 3 different functions during meiosis: ensures that sufficient numbers of processed DNA double-strand breaks (DSBs) are available for successful homology search by increasing the steady-state numbers of single-stranded DSB ends. Promotes synaptonemal-complex formation independently of its role in homology search. Plays a key role in the male mid-pachytene checkpoint and the female meiotic prophase checkpoint: required for efficient build-up of ATR activity on unsynapsed chromosome regions, a process believed to form the basis of meiotic silencing of unsynapsed chromatin (MSUC) and meiotic prophase quality control in both sexes. In Bos taurus (Bovine), this protein is HORMA domain-containing protein 1 (HORMAD1).